Consider the following 309-residue polypeptide: Elongation factor Ts (309 aa).

The tract at residues Thr82 to Val85 is involved in Mg(2+) ion dislocation from EF-Tu.

This sequence belongs to the EF-Ts family.

It is found in the cytoplasm. Associates with the EF-Tu.GDP complex and induces the exchange of GDP to GTP. It remains bound to the aminoacyl-tRNA.EF-Tu.GTP complex up to the GTP hydrolysis stage on the ribosome. The polypeptide is Elongation factor Ts (Rickettsia bellii (strain OSU 85-389)).